The chain runs to 230 residues: Ribonuclease 3 (230 aa).

The region spanning Asp10–Gly133 is the RNase III domain. Glu46 contributes to the Mg(2+) binding site. Asp50 is an active-site residue. Mg(2+)-binding residues include Asp119 and Glu122. The active site involves Glu122. The DRBM domain maps to Asp161 to Gln230.

The protein belongs to the ribonuclease III family. In terms of assembly, homodimer. It depends on Mg(2+) as a cofactor.

It is found in the cytoplasm. It carries out the reaction Endonucleolytic cleavage to 5'-phosphomonoester.. Functionally, digests double-stranded RNA. Involved in the processing of primary rRNA transcript to yield the immediate precursors to the large and small rRNAs (23S and 16S). Processes some mRNAs, and tRNAs when they are encoded in the rRNA operon. Processes pre-crRNA and tracrRNA of type II CRISPR loci if present in the organism. This is Ribonuclease 3 (rnc) from Acinetobacter pittii (strain PHEA-2).